The sequence spans 151 residues: U-scoloptoxin(17)-Er2a (151 aa).

The N-terminal stretch at 1–22 is a signal peptide; it reads MKSFFVVFAIVFQATLVALSLA.

The protein belongs to the scoloptoxin-17 family. Contains 5 disulfide bonds. In terms of tissue distribution, expressed by the venom gland.

The protein resides in the secreted. This is U-scoloptoxin(17)-Er2a from Ethmostigmus rubripes (Giant centipede).